The primary structure comprises 548 residues: Chaperonin GroEL (548 aa).

ATP contacts are provided by residues 30–33 (TLGP), Lys51, 87–91 (DGTTT), Gly415, and 479–481 (NAV).

This sequence belongs to the chaperonin (HSP60) family. As to quaternary structure, forms a cylinder of 14 subunits composed of two heptameric rings stacked back-to-back. Interacts with the co-chaperonin GroES.

The protein localises to the cytoplasm. It carries out the reaction ATP + H2O + a folded polypeptide = ADP + phosphate + an unfolded polypeptide.. Together with its co-chaperonin GroES, plays an essential role in assisting protein folding. The GroEL-GroES system forms a nano-cage that allows encapsulation of the non-native substrate proteins and provides a physical environment optimized to promote and accelerate protein folding. The chain is Chaperonin GroEL from Stenotrophomonas maltophilia (Pseudomonas maltophilia).